The primary structure comprises 161 residues: Shikimate kinase (161 aa).

10–15 (GAGKTT) provides a ligand contact to ATP. Thr-14 contacts Mg(2+). Asp-28, Arg-52, and Gly-74 together coordinate substrate. Arg-114 provides a ligand contact to ATP. Arg-132 lines the substrate pocket.

It belongs to the shikimate kinase family. In terms of assembly, monomer. It depends on Mg(2+) as a cofactor.

It is found in the cytoplasm. The enzyme catalyses shikimate + ATP = 3-phosphoshikimate + ADP + H(+). It participates in metabolic intermediate biosynthesis; chorismate biosynthesis; chorismate from D-erythrose 4-phosphate and phosphoenolpyruvate: step 5/7. Catalyzes the specific phosphorylation of the 3-hydroxyl group of shikimic acid using ATP as a cosubstrate. This chain is Shikimate kinase, found in Streptococcus gordonii (strain Challis / ATCC 35105 / BCRC 15272 / CH1 / DL1 / V288).